A 594-amino-acid chain; its full sequence is Cryptochrome-2 (594 aa).

The Photolyase/cryptochrome alpha/beta domain occupies 21 to 150 (ASSVHWFRKG…EVVTENSHTL (130 aa)). Residue Lys29 forms a Glycyl lysine isopeptide (Lys-Gly) (interchain with G-Cter in ubiquitin) linkage. Residue Ser89 is modified to Phosphoserine. Glycyl lysine isopeptide (Lys-Gly) (interchain with G-Cter in ubiquitin) cross-links involve residues Lys125 and Lys241. A Phosphoserine; by MAPK modification is found at Ser265. Ser270 contacts FAD. A Phosphoserine modification is found at Ser298. Gln307 contributes to the FAD binding site. A Glycyl lysine isopeptide (Lys-Gly) (interchain with G-Cter in ubiquitin) cross-link involves residue Lys347. Residues His373 and 405-407 (DAD) each bind FAD. The tract at residues 389-488 (WVSWESGVRV…IIGVDYPRPI (100 aa)) is required for inhibition of CLOCK-BMAL1-mediated transcription. Residues Lys474 and Lys503 each participate in a glycyl lysine isopeptide (Lys-Gly) (interchain with G-Cter in ubiquitin) cross-link. The disordered stretch occupies residues 532–594 (VAEPGSSQAG…PAQEPPSKDS (63 aa)). A compositionally biased stretch (polar residues) spans 536 to 547 (GSSQAGSISNTG). Ser553 is modified (phosphoserine; by GSK3-beta). A Phosphoserine; by DYRK1A and MAPK modification is found at Ser557.

The protein belongs to the DNA photolyase class-1 family. In terms of assembly, component of the circadian core oscillator, which includes the CRY proteins, CLOCK or NPAS2, BMAL1 or BMAL2, CSNK1D and/or CSNK1E, TIMELESS, and the PER proteins. Interacts with TIMELESS. Interacts directly with PER1, PER2 and PER3; interaction with PER2 inhibits its ubiquitination and vice versa. Interacts with CLOCK-BMAL1. Interacts with CLOCK. Interacts with BMAL1. Interacts with NFIL3. Interacts with FBXL3 and FBXL21. FBXL3, PER2 and the cofactor FAD compete for overlapping binding sites. FBXL3 cannot bind CRY2 that interacts already with PER2 or that contains bound FAD. Interacts with PPP5C (via TPR repeats); the interaction down-regulates the PPP5C phosphatase activity on CSNK1E. Interacts with nuclear receptors AR and NR3C1/GR; the interaction is ligand dependent. Interacts with PRKDC and CIART. Interacts with DDB1, USP7 and TARDBP. Interacts with HNF4A and PPARA. Interacts with PPARD (via domain NR LBD) and NR1I2 (via domain NR LBD) in a ligand-dependent manner. Interacts with PPARG, NR1I3 and VDR in a ligand-dependent manner. The cofactor is FAD. It depends on (6R)-5,10-methylene-5,6,7,8-tetrahydrofolate as a cofactor. Post-translationally, phosphorylation on Ser-265 by MAPK is important for the inhibition of CLOCK-BMAL1-mediated transcriptional activity. Phosphorylation by CSKNe requires interaction with PER1 or PER2. Phosphorylated in a circadian manner at Ser-553 and Ser-557 in the suprachiasmatic nucleus (SCN) and liver. Phosphorylation at Ser-557 by DYRK1A promotes subsequent phosphorylation at Ser-553 by GSK3-beta: the two-step phosphorylation at the neighboring Ser residues leads to its proteasomal degradation. In terms of processing, ubiquitinated by the SCF(FBXL3) and SCF(FBXL21) complexes, regulating the balance between degradation and stabilization. The SCF(FBXL3) complex is mainly nuclear and mediates ubiquitination and subsequent degradation of CRY2. In contrast, cytoplasmic SCF(FBXL21) complex-mediated ubiquitination leads to stabilize CRY2 and counteract the activity of the SCF(FBXL3) complex. The SCF(FBXL3) and SCF(FBXL21) complexes probably mediate ubiquitination at different Lys residues. The SCF(FBXL3) complex recognizes and binds CRY2 phosphorylated at Ser-553 and Ser-557. Ubiquitination may be inhibited by PER2. Deubiquitinated by USP7. In terms of tissue distribution, expressed in all tissues examined including heart, cerebellum, cerebral cortex, lung, liver, muscle, kidney and ovary. Highest levels in heart, liver and ovary. Highly expressed in the suprachiasmatic nucleus (SCN).

The protein resides in the cytoplasm. It localises to the nucleus. Its function is as follows. Transcriptional repressor which forms a core component of the circadian clock. The circadian clock, an internal time-keeping system, regulates various physiological processes through the generation of approximately 24 hour circadian rhythms in gene expression, which are translated into rhythms in metabolism and behavior. It is derived from the Latin roots 'circa' (about) and 'diem' (day) and acts as an important regulator of a wide array of physiological functions including metabolism, sleep, body temperature, blood pressure, endocrine, immune, cardiovascular, and renal function. Consists of two major components: the central clock, residing in the suprachiasmatic nucleus (SCN) of the brain, and the peripheral clocks that are present in nearly every tissue and organ system. Both the central and peripheral clocks can be reset by environmental cues, also known as Zeitgebers (German for 'timegivers'). The predominant Zeitgeber for the central clock is light, which is sensed by retina and signals directly to the SCN. The central clock entrains the peripheral clocks through neuronal and hormonal signals, body temperature and feeding-related cues, aligning all clocks with the external light/dark cycle. Circadian rhythms allow an organism to achieve temporal homeostasis with its environment at the molecular level by regulating gene expression to create a peak of protein expression once every 24 hours to control when a particular physiological process is most active with respect to the solar day. Transcription and translation of core clock components (CLOCK, NPAS2, BMAL1, BMAL2, PER1, PER2, PER3, CRY1 and CRY2) plays a critical role in rhythm generation, whereas delays imposed by post-translational modifications (PTMs) are important for determining the period (tau) of the rhythms (tau refers to the period of a rhythm and is the length, in time, of one complete cycle). A diurnal rhythm is synchronized with the day/night cycle, while the ultradian and infradian rhythms have a period shorter and longer than 24 hours, respectively. Disruptions in the circadian rhythms contribute to the pathology of cardiovascular diseases, cancer, metabolic syndromes and aging. A transcription/translation feedback loop (TTFL) forms the core of the molecular circadian clock mechanism. Transcription factors, CLOCK or NPAS2 and BMAL1 or BMAL2, form the positive limb of the feedback loop, act in the form of a heterodimer and activate the transcription of core clock genes and clock-controlled genes (involved in key metabolic processes), harboring E-box elements (5'-CACGTG-3') within their promoters. The core clock genes: PER1/2/3 and CRY1/2 which are transcriptional repressors form the negative limb of the feedback loop and interact with the CLOCK|NPAS2-BMAL1|BMAL2 heterodimer inhibiting its activity and thereby negatively regulating their own expression. This heterodimer also activates nuclear receptors NR1D1/2 and RORA/B/G, which form a second feedback loop and which activate and repress BMAL1 transcription, respectively. CRY1 and CRY2 have redundant functions but also differential and selective contributions at least in defining the pace of the SCN circadian clock and its circadian transcriptional outputs. Less potent transcriptional repressor in cerebellum and liver than CRY1, though less effective in lengthening the period of the SCN oscillator. Seems to play a critical role in tuning SCN circadian period by opposing the action of CRY1. With CRY1, dispensable for circadian rhythm generation but necessary for the development of intercellular networks for rhythm synchrony. May mediate circadian regulation of cAMP signaling and gluconeogenesis by blocking glucagon-mediated increases in intracellular cAMP concentrations and in CREB1 phosphorylation. Besides its role in the maintenance of the circadian clock, is also involved in the regulation of other processes. Plays a key role in glucose and lipid metabolism modulation, in part, through the transcriptional regulation of genes involved in these pathways, such as LEP or ACSL4. Represses glucocorticoid receptor NR3C1/GR-induced transcriptional activity by binding to glucocorticoid response elements (GREs). Represses the CLOCK-BMAL1 induced transcription of BHLHE40/DEC1 and NAMPT. Represses PPARD and its target genes in the skeletal muscle and limits exercise capacity. Represses the transcriptional activity of NR1I2. The chain is Cryptochrome-2 (Cry2) from Rattus norvegicus (Rat).